A 440-amino-acid polypeptide reads, in one-letter code: Putative epoxide hydrolase (440 aa).

Residues 1–21 (MTKTLAEQPGEGAAPVSPSPS) form a disordered region. The segment at residues 1–49 (MTKTLAEQPGEGAAPVSPSPSRRALLHGAAGLGALAAGAAVAGPGLAFA) is a signal peptide (tat-type signal).

This sequence belongs to the peptidase S33 family. Predicted to be exported by the Tat system. The position of the signal peptide cleavage has not been experimentally proven.

It catalyses the reaction an epoxide + H2O = an ethanediol. The protein is Putative epoxide hydrolase of Stigmatella aurantiaca (strain DW4/3-1).